We begin with the raw amino-acid sequence, 269 residues long: Hydroxyethylthiazole kinase (269 aa).

Met42 is a substrate binding site. ATP is bound by residues Arg118 and Ser164. Gly191 provides a ligand contact to substrate.

Belongs to the Thz kinase family. Mg(2+) serves as cofactor.

The catalysed reaction is 5-(2-hydroxyethyl)-4-methylthiazole + ATP = 4-methyl-5-(2-phosphooxyethyl)-thiazole + ADP + H(+). It functions in the pathway cofactor biosynthesis; thiamine diphosphate biosynthesis; 4-methyl-5-(2-phosphoethyl)-thiazole from 5-(2-hydroxyethyl)-4-methylthiazole: step 1/1. Functionally, catalyzes the phosphorylation of the hydroxyl group of 4-methyl-5-beta-hydroxyethylthiazole (THZ). This chain is Hydroxyethylthiazole kinase, found in Listeria monocytogenes serotype 4a (strain HCC23).